A 226-amino-acid chain; its full sequence is UPF0173 metal-dependent hydrolase Minf_0129 (226 aa).

This sequence belongs to the UPF0173 family.

The chain is UPF0173 metal-dependent hydrolase Minf_0129 from Methylacidiphilum infernorum (isolate V4) (Methylokorus infernorum (strain V4)).